A 498-amino-acid chain; its full sequence is ATP synthase subunit beta, chloroplastic (498 aa).

172 to 179 (GGAGVGKT) lines the ATP pocket.

It belongs to the ATPase alpha/beta chains family. F-type ATPases have 2 components, CF(1) - the catalytic core - and CF(0) - the membrane proton channel. CF(1) has five subunits: alpha(3), beta(3), gamma(1), delta(1), epsilon(1). CF(0) has four main subunits: a(1), b(1), b'(1) and c(9-12).

Its subcellular location is the plastid. It localises to the chloroplast thylakoid membrane. It catalyses the reaction ATP + H2O + 4 H(+)(in) = ADP + phosphate + 5 H(+)(out). Functionally, produces ATP from ADP in the presence of a proton gradient across the membrane. The catalytic sites are hosted primarily by the beta subunits. This chain is ATP synthase subunit beta, chloroplastic, found in Liriodendron tulipifera (Tuliptree).